The chain runs to 346 residues: Cell division protein ZipA (346 aa).

The Periplasmic portion of the chain corresponds to 1–6 (MEDLQL). A helical membrane pass occupies residues 7–27 (VLFVLGAIAIVAVLVHGFWSI). At 28-346 (RRQQPKSLKD…DYLHRIRANA (319 aa)) the chain is on the cytoplasmic side. Disordered stretches follow at residues 76-103 (ANEA…QPVE) and 121-145 (QPDF…RQEP).

Belongs to the ZipA family. As to quaternary structure, interacts with FtsZ via their C-terminal domains.

The protein resides in the cell inner membrane. Its function is as follows. Essential cell division protein that stabilizes the FtsZ protofilaments by cross-linking them and that serves as a cytoplasmic membrane anchor for the Z ring. Also required for the recruitment to the septal ring of downstream cell division proteins. This chain is Cell division protein ZipA, found in Shewanella sp. (strain MR-7).